A 795-amino-acid polypeptide reads, in one-letter code: Mitochondrial intermediate peptidase (795 aa).

The N-terminal 22 residues, methionine 1–asparagine 22, are a transit peptide targeting the mitochondrion. Histidine 561 is a Zn(2+) binding site. The active site involves glutamate 562. Histidine 565 and histidine 568 together coordinate Zn(2+).

This sequence belongs to the peptidase M3 family. Zn(2+) serves as cofactor.

The protein localises to the mitochondrion matrix. The catalysed reaction is Release of an N-terminal octapeptide as second stage of processing of some proteins imported into the mitochondrion.. Its function is as follows. Cleaves proteins, imported into the mitochondrion, to their mature size. While most mitochondrial precursor proteins are processed to the mature form in one step by mitochondrial processing peptidase (MPP), the sequential cleavage by MIP of an octapeptide after initial processing by MPP is a required step for a subgroup of nuclear-encoded precursor proteins destined for the matrix or the inner membrane. The protein is Mitochondrial intermediate peptidase (OCT1) of Coccidioides immitis (strain RS) (Valley fever fungus).